Reading from the N-terminus, the 134-residue chain is Secreted RxLR effector protein 1 (134 aa).

Positions 1-22 (MFCRSPLVAVILLVLATHIVLA) are cleaved as a signal peptide. The interval 32 to 60 (SETVPSDSSQTTRKSTRRTTSVDNKRRLR) is disordered. A compositionally biased stretch (low complexity) spans 37–52 (SDSSQTTRKSTRRTTS). The RxLR-dEER signature appears at 57–79 (RRLRQQIMGKDGPVVNDVHAEER).

The protein belongs to the RxLR effector family.

It is found in the secreted. Its subcellular location is the host nucleus. In terms of biological role, effector that acts as a broad suppressor of cell death to interrupt plant immunity. Inhibits cell death induced by cell death-inducing proteins, including the PAMP elicitor INF1 from P.infestans. This chain is Secreted RxLR effector protein 1, found in Plasmopara viticola (Downy mildew of grapevine).